Consider the following 158-residue polypeptide: ATP synthase subunit beta, mitochondrial (158 aa).

This sequence belongs to the ATPase alpha/beta chains family. F-type ATPases have 2 components, CF(1) - the catalytic core - and CF(0) - the membrane proton channel. CF(1) has five subunits: alpha(3), beta(3), gamma(1), delta(1), epsilon(1). CF(0) has three main subunits: a, b and c.

It is found in the mitochondrion. Its subcellular location is the mitochondrion inner membrane. The catalysed reaction is ATP + H2O + 4 H(+)(in) = ADP + phosphate + 5 H(+)(out). Functionally, mitochondrial membrane ATP synthase (F(1)F(0) ATP synthase or Complex V) produces ATP from ADP in the presence of a proton gradient across the membrane which is generated by electron transport complexes of the respiratory chain. F-type ATPases consist of two structural domains, F(1) - containing the extramembraneous catalytic core, and F(0) - containing the membrane proton channel, linked together by a central stalk and a peripheral stalk. During catalysis, ATP synthesis in the catalytic domain of F(1) is coupled via a rotary mechanism of the central stalk subunits to proton translocation. Subunits alpha and beta form the catalytic core in F(1). Rotation of the central stalk against the surrounding alpha(3)beta(3) subunits leads to hydrolysis of ATP in three separate catalytic sites on the beta subunits. The protein is ATP synthase subunit beta, mitochondrial of Schizaphis graminum (Green bug aphid).